Here is a 360-residue protein sequence, read N- to C-terminus: G-protein coupled receptor 15 (360 aa).

The Extracellular portion of the chain corresponds to 1–33 (MDPEETSVYLDYYYATSPNPDIRETHSHVPYTS). A helical membrane pass occupies residues 34–54 (VFLPVFYTAVFLTGVLGNLVL). Residues 55-69 (MGALHFKPGSRRLID) lie on the Cytoplasmic side of the membrane. The chain crosses the membrane as a helical span at residues 70 to 90 (IFIINLAASDFIFLVTLPLWV). Over 91–120 (DKEASLGLWRTGSFLCKGSSYMISVNMHCS) the chain is Extracellular. A helical membrane pass occupies residues 121–141 (VFLLTCMSVDRYLAIVCPVVS). At 142 to 149 (RKFRRTDC) the chain is on the cytoplasmic side. Residues 150–170 (AYVVCASIWFISCLLGLPTLL) traverse the membrane as a helical segment. The Extracellular segment spans residues 171–192 (SRELTLIDDKPYCAEKKATPLK). A helical membrane pass occupies residues 193-213 (LIWSLVALIFTFFVPLLSIVT). Residues 214–239 (CYCCIARKLCAHYQQSGKHNKKLKKS) are Cytoplasmic-facing. A helical transmembrane segment spans residues 240-260 (IKIIFIVVAAFLVSWLPFNTF). The Extracellular segment spans residues 261–284 (KLLAIVSGLQQERYFPSAMLQLGM). A helical transmembrane segment spans residues 285 to 305 (EVSGPLAFANSCVNPFIYYIF). Residues 306–360 (DSYIRRAIVHCLCPCLKNYDFGSSTETSDSHLTKALSTFIHAEDFTRRRKRSVSL) are Cytoplasmic-facing. S359 is modified (phosphoserine).

This sequence belongs to the G-protein coupled receptor 1 family. In terms of assembly, interacts with adapter YWHAE; this interaction promotes ER-to-Golgi transport of GPR15. Phosphorylation is necessary for YWHAE binding and efficient surface expression. In terms of processing, O-glycosylated. Sialylated O-glycans in the N-terminal tail inhibits binding of GPR15LG. Post-translationally, sulfation is required for efficient binding of GPR15LG.

Its subcellular location is the cell membrane. Its function is as follows. G protein-coupled receptor that plays an important role in immune homeostasis. Acts via its natural ligand GPR15LG, a chemokine-like polypeptide strongly expressed in gastrointestinal tissues. GPR15-GPR15LG signaling axis regulates intestinal homeostasis and inflammation through the migration of immune cells. Controls thereby the specific homing of T-cells, particularly FOXP3+ regulatory T-cells (Tregs), to the large intestine lamina propria. Also required for skin localization of thymus-derived dendritic epidermal T-cells. Plays an important role in mediating cytoprotective function as well as angiogenesis of thrombomodulin. Mechanistically, preferentially signals through the Gi/o pathway to inhibit adenylate cyclase activity and activate a phosphatidylinositol-calcium second messenger system that regulates the release of Ca(2+) ions from intracellular stores. The protein is G-protein coupled receptor 15 (GPR15) of Macaca mulatta (Rhesus macaque).